Here is a 417-residue protein sequence, read N- to C-terminus: Protein translocase subunit SecD (417 aa).

6 helical membrane-spanning segments follow: residues 9–29, 236–256, 258–278, 288–308, 333–353, and 360–380; these read LLVS…PLVS, ASMK…LLYY, LSGL…LAVM, PGMA…VLIF, FTTI…LFYL, and GFAV…VTVT.

Belongs to the SecD/SecF family. SecD subfamily. In terms of assembly, forms a complex with SecF. Part of the essential Sec protein translocation apparatus which comprises SecA, SecYEG and auxiliary proteins SecDF. Other proteins may also be involved.

The protein resides in the cell membrane. Its function is as follows. Part of the Sec protein translocase complex. Interacts with the SecYEG preprotein conducting channel. SecDF uses the proton motive force (PMF) to complete protein translocation after the ATP-dependent function of SecA. In Acidaminococcus fermentans (strain ATCC 25085 / DSM 20731 / CCUG 9996 / CIP 106432 / VR4), this protein is Protein translocase subunit SecD.